The sequence spans 200 residues: Proteasome subunit beta 2 (200 aa).

Positions 1–10 (MSDQLELMTG) are cleaved as a propeptide — removed in mature form; by autocatalysis. T11 serves as the catalytic Nucleophile.

Belongs to the peptidase T1B family. In terms of assembly, the 20S proteasome core is composed of 14 alpha and 14 beta subunits that assemble into four stacked heptameric rings, resulting in a barrel-shaped structure. The two inner rings, each composed of seven catalytic beta subunits, are sandwiched by two outer rings, each composed of seven alpha subunits. The catalytic chamber with the active sites is on the inside of the barrel. Has a gated structure, the ends of the cylinder being occluded by the N-termini of the alpha-subunits. Is capped at one or both ends by the proteasome regulatory ATPase, PAN.

The protein resides in the cytoplasm. The enzyme catalyses Cleavage of peptide bonds with very broad specificity.. With respect to regulation, the formation of the proteasomal ATPase PAN-20S proteasome complex, via the docking of the C-termini of PAN into the intersubunit pockets in the alpha-rings, triggers opening of the gate for substrate entry. Interconversion between the open-gate and close-gate conformations leads to a dynamic regulation of the 20S proteasome proteolysis activity. Functionally, component of the proteasome core, a large protease complex with broad specificity involved in protein degradation. In Caldivirga maquilingensis (strain ATCC 700844 / DSM 13496 / JCM 10307 / IC-167), this protein is Proteasome subunit beta 2.